The following is a 191-amino-acid chain: Protein GrpE (191 aa).

A compositionally biased stretch (basic and acidic residues) spans methionine 1–aspartate 15. The disordered stretch occupies residues methionine 1 to glutamate 35.

This sequence belongs to the GrpE family. In terms of assembly, homodimer.

The protein resides in the cytoplasm. Participates actively in the response to hyperosmotic and heat shock by preventing the aggregation of stress-denatured proteins, in association with DnaK and GrpE. It is the nucleotide exchange factor for DnaK and may function as a thermosensor. Unfolded proteins bind initially to DnaJ; upon interaction with the DnaJ-bound protein, DnaK hydrolyzes its bound ATP, resulting in the formation of a stable complex. GrpE releases ADP from DnaK; ATP binding to DnaK triggers the release of the substrate protein, thus completing the reaction cycle. Several rounds of ATP-dependent interactions between DnaJ, DnaK and GrpE are required for fully efficient folding. This is Protein GrpE from Francisella philomiragia subsp. philomiragia (strain ATCC 25017 / CCUG 19701 / FSC 153 / O#319-036).